A 188-amino-acid polypeptide reads, in one-letter code: Peptidyl-tRNA hydrolase (188 aa).

Residue tyrosine 14 coordinates tRNA. The active-site Proton acceptor is the histidine 19. Positions 64, 66, and 112 each coordinate tRNA.

Belongs to the PTH family. In terms of assembly, monomer.

It localises to the cytoplasm. It catalyses the reaction an N-acyl-L-alpha-aminoacyl-tRNA + H2O = an N-acyl-L-amino acid + a tRNA + H(+). Its function is as follows. Hydrolyzes ribosome-free peptidyl-tRNAs (with 1 or more amino acids incorporated), which drop off the ribosome during protein synthesis, or as a result of ribosome stalling. In terms of biological role, catalyzes the release of premature peptidyl moieties from peptidyl-tRNA molecules trapped in stalled 50S ribosomal subunits, and thus maintains levels of free tRNAs and 50S ribosomes. Releases Ala-tailed nascent peptides from stalled 50S ribosomal subunits. Non-templated Ala tailing occurs as part of the ribosome quality control (RQC) pathway. In the absence of Ala tails significantly less peptide release occurs. The Ala tail facilitates the interaction of Pth with the nascent peptide-tRNA ester bond as well as promoting nascent chain degradation; 3 Ala residues suffice to stimulate peptide release from stalled 50S ribosomal subunits. Complements a temperature-sensitive pth mutation in E.coli. The sequence is that of Peptidyl-tRNA hydrolase from Bacillus subtilis (strain 168).